Consider the following 95-residue polypeptide: Aspartyl/glutamyl-tRNA(Asn/Gln) amidotransferase subunit C (95 aa).

Belongs to the GatC family. In terms of assembly, heterotrimer of A, B and C subunits.

The enzyme catalyses L-glutamyl-tRNA(Gln) + L-glutamine + ATP + H2O = L-glutaminyl-tRNA(Gln) + L-glutamate + ADP + phosphate + H(+). The catalysed reaction is L-aspartyl-tRNA(Asn) + L-glutamine + ATP + H2O = L-asparaginyl-tRNA(Asn) + L-glutamate + ADP + phosphate + 2 H(+). Allows the formation of correctly charged Asn-tRNA(Asn) or Gln-tRNA(Gln) through the transamidation of misacylated Asp-tRNA(Asn) or Glu-tRNA(Gln) in organisms which lack either or both of asparaginyl-tRNA or glutaminyl-tRNA synthetases. The reaction takes place in the presence of glutamine and ATP through an activated phospho-Asp-tRNA(Asn) or phospho-Glu-tRNA(Gln). The polypeptide is Aspartyl/glutamyl-tRNA(Asn/Gln) amidotransferase subunit C (Thermodesulfovibrio yellowstonii (strain ATCC 51303 / DSM 11347 / YP87)).